A 210-amino-acid polypeptide reads, in one-letter code: Ribosomal RNA large subunit methyltransferase E (210 aa).

S-adenosyl-L-methionine contacts are provided by G60, W62, D80, D96, and D121. K161 (proton acceptor) is an active-site residue.

This sequence belongs to the class I-like SAM-binding methyltransferase superfamily. RNA methyltransferase RlmE family.

Its subcellular location is the cytoplasm. It carries out the reaction uridine(2552) in 23S rRNA + S-adenosyl-L-methionine = 2'-O-methyluridine(2552) in 23S rRNA + S-adenosyl-L-homocysteine + H(+). In terms of biological role, specifically methylates the uridine in position 2552 of 23S rRNA at the 2'-O position of the ribose in the fully assembled 50S ribosomal subunit. The protein is Ribosomal RNA large subunit methyltransferase E of Vesicomyosocius okutanii subsp. Calyptogena okutanii (strain HA).